Consider the following 507-residue polypeptide: Putative UDP-glucuronosyltransferase ugt-60 (507 aa).

Residues 1 to 15 form the signal peptide; the sequence is MYLPIFCIFLSVVDS. Residue asparagine 312 is glycosylated (N-linked (GlcNAc...) asparagine). The helical transmembrane segment at 379–399 threads the bilayer; that stretch reads YNSFLEAAQAGIPAVLMPLFA.

The protein belongs to the UDP-glycosyltransferase family.

It localises to the membrane. The enzyme catalyses glucuronate acceptor + UDP-alpha-D-glucuronate = acceptor beta-D-glucuronoside + UDP + H(+). In Caenorhabditis elegans, this protein is Putative UDP-glucuronosyltransferase ugt-60 (ugt-60).